Consider the following 64-residue polypeptide: Large ribosomal subunit protein uL29 (64 aa).

Belongs to the universal ribosomal protein uL29 family.

The protein is Large ribosomal subunit protein uL29 of Verminephrobacter eiseniae (strain EF01-2).